We begin with the raw amino-acid sequence, 571 residues long: Glutamine--tRNA ligase (571 aa).

The 'HIGH' region motif lies at 35-45 (PEPNGYLHIGH). Residues 36–38 (EPN) and 42–48 (HIGHAKS) contribute to the ATP site. The L-glutamine site is built by Asp68 and Tyr213. ATP is bound by residues Thr232, 262–263 (RL), and 270–272 (LSK). A 'KMSKS' region motif is present at residues 269–273 (ILSKR).

Belongs to the class-I aminoacyl-tRNA synthetase family. As to quaternary structure, monomer.

The protein localises to the cytoplasm. It carries out the reaction tRNA(Gln) + L-glutamine + ATP = L-glutaminyl-tRNA(Gln) + AMP + diphosphate. The sequence is that of Glutamine--tRNA ligase from Buchnera aphidicola subsp. Acyrthosiphon pisum (strain 5A).